Here is an 855-residue protein sequence, read N- to C-terminus: Replication factor C small subunit (855 aa).

Residues 185 to 308 (WLGYFLGGGY…IAYALAGFGI (124 aa)) form the DOD-type homing endonuclease domain.

Belongs to the activator 1 small subunits family. RfcS subfamily. Heteromultimer composed of small subunits (RfcS) and large subunits (RfcL). This protein undergoes a protein self splicing that involves a post-translational excision of the intervening region (intein) followed by peptide ligation.

Part of the RFC clamp loader complex which loads the PCNA sliding clamp onto DNA. The protein is Replication factor C small subunit (rfcS) of Pyrococcus horikoshii (strain ATCC 700860 / DSM 12428 / JCM 9974 / NBRC 100139 / OT-3).